We begin with the raw amino-acid sequence, 59 residues long: UPF0434 protein HDEF_0234 (59 aa).

It belongs to the UPF0434 family.

This is UPF0434 protein HDEF_0234 from Hamiltonella defensa subsp. Acyrthosiphon pisum (strain 5AT).